The chain runs to 256 residues: UPF0246 protein Sde_3824 (256 aa).

The protein belongs to the UPF0246 family.

This is UPF0246 protein Sde_3824 from Saccharophagus degradans (strain 2-40 / ATCC 43961 / DSM 17024).